Reading from the N-terminus, the 364-residue chain is GTPase Obg (364 aa).

Positions 1-161 constitute an Obg domain; sequence MRFVDEVTIS…KYLRLELKIL (161 aa). Positions 162–334 constitute an OBG-type G domain; it reads ADAGIIGLPN…LVDAIWKLQS (173 aa). GTP is bound by residues 168–175, 193–197, 217–220, 287–290, and 315–317; these read GLPNAGKS, FTTLN, DIPG, NKID, and SAE. Mg(2+) is bound by residues Ser-175 and Thr-195.

The protein belongs to the TRAFAC class OBG-HflX-like GTPase superfamily. OBG GTPase family. In terms of assembly, monomer. It depends on Mg(2+) as a cofactor.

The protein resides in the cytoplasm. Its function is as follows. An essential GTPase which binds GTP, GDP and possibly (p)ppGpp with moderate affinity, with high nucleotide exchange rates and a fairly low GTP hydrolysis rate. Plays a role in control of the cell cycle, stress response, ribosome biogenesis and in those bacteria that undergo differentiation, in morphogenesis control. The protein is GTPase Obg of Lawsonia intracellularis (strain PHE/MN1-00).